Consider the following 83-residue polypeptide: UPF0248 protein PYRAB10580 (83 aa).

The protein belongs to the UPF0248 family.

This is UPF0248 protein PYRAB10580 from Pyrococcus abyssi (strain GE5 / Orsay).